A 588-amino-acid chain; its full sequence is Ribonuclease Y (588 aa).

The chain crosses the membrane as a helical span at residues 7–27 (VLLVAVLLLTVVVVGAVLVGV). A KH domain is found at 278-359 (VVSVLHLPGD…HRIEEVHDLA (82 aa)). Positions 404-497 (VLKHLVESAH…TQASDACSGG (94 aa)) constitute an HD domain.

It belongs to the RNase Y family.

The protein localises to the cell membrane. Its function is as follows. Endoribonuclease that initiates mRNA decay. The polypeptide is Ribonuclease Y (Salinispora tropica (strain ATCC BAA-916 / DSM 44818 / JCM 13857 / NBRC 105044 / CNB-440)).